The sequence spans 914 residues: DNA mismatch repair protein MutS (914 aa).

A disordered region spans residues 1 to 24; it reads MDNKTDNKNNLTPQSAPSSAPHKE. Over residues 8-18 the composition is skewed to polar residues; that stretch reads KNNLTPQSAPS. 662–669 serves as a coordination point for ATP; sequence GPNMGGKS.

Belongs to the DNA mismatch repair MutS family.

In terms of biological role, this protein is involved in the repair of mismatches in DNA. It is possible that it carries out the mismatch recognition step. This protein has a weak ATPase activity. This chain is DNA mismatch repair protein MutS, found in Bartonella henselae (strain ATCC 49882 / DSM 28221 / CCUG 30454 / Houston 1) (Rochalimaea henselae).